A 236-amino-acid polypeptide reads, in one-letter code: Large ribosomal subunit protein uL3 (236 aa).

The protein belongs to the universal ribosomal protein uL3 family. As to quaternary structure, part of the 50S ribosomal subunit. Forms a cluster with proteins L14 and L19.

In terms of biological role, one of the primary rRNA binding proteins, it binds directly near the 3'-end of the 23S rRNA, where it nucleates assembly of the 50S subunit. The polypeptide is Large ribosomal subunit protein uL3 (Anaeromyxobacter dehalogenans (strain 2CP-C)).